The chain runs to 244 residues: Haloacid dehalogenase-like hydrolase domain-containing protein 3 (244 aa).

It belongs to the HAD-like hydrolase superfamily.

The protein is Haloacid dehalogenase-like hydrolase domain-containing protein 3 (hdhd3) of Xenopus laevis (African clawed frog).